A 55-amino-acid polypeptide reads, in one-letter code: Large ribosomal subunit protein bL33 (55 aa).

This sequence belongs to the bacterial ribosomal protein bL33 family.

This Aliivibrio fischeri (strain ATCC 700601 / ES114) (Vibrio fischeri) protein is Large ribosomal subunit protein bL33.